Reading from the N-terminus, the 284-residue chain is Tegument protein VP22 (284 aa).

Disordered regions lie at residues 1-126 (MSYY…WSID) and 239-284 (LYAS…SRRR). Basic and acidic residues predominate over residues 74–83 (SRDDDDRRQP). Basic residues predominate over residues 94-108 (ERRKSQTTVTTRRKT). The span at 115-126 (KSSNSNGPWSID) shows a compositional bias: polar residues.

Belongs to the alphaherpesvirinae VP22 tegument protein family. Interacts with gE (via C-terminus); this interaction is necessary for the recruitment of VP22 to the Golgi and its packaging into virions. Interacts with gM (via C-terminus). Interacts with VP16; this interaction allows the formation of a tripartite complex composed of VP16, VP22 and UL41/VHS. Interacts with the capsid-binding protein UL16. Interacts with host CGAS. Highly phosphorylated in the host cell. Packaging is selective for underphosphorylated forms.

It is found in the virion tegument. The protein localises to the host cytoplasm. Its subcellular location is the host nucleus. It localises to the host Golgi apparatus. Tegument protein that plays different roles during the time course of infection. Participates in both the accumulation of viral mRNAs and viral protein translation at late time of infection. Modulates the RNase activity of the virion host shutoff protein UL41 probably to ensure necessary levels of key cellular mRNAs and proteins. Plays a role in microtubule reorganization that occurs after viral infection by stabilizing microtubule network. Plays a role in the inhibition of host innate immune system by targeting the CGAS enzymatic activity which is the principal cytosolic DNA sensor that detects invading viral DNA. Acts by mediating disruption of liquid-like droplets in which CGAS is activated, thereby preventing CGAS activity. This Amazona oratrix (yellow-headed parrot) protein is Tegument protein VP22 (UL49).